The chain runs to 130 residues: Phosphomevalonate dehydratase small subunit (130 aa).

S62 functions as the Proton acceptor in the catalytic mechanism.

It belongs to the AcnX type II small subunit family. In terms of assembly, heterodimer composed of a large subunit (PMDh-L) and a small subunit (PMDh-S).

The catalysed reaction is (R)-5-phosphomevalonate = (2E)-3-methyl-5-phosphooxypent-2-enoate + H2O. It functions in the pathway isoprenoid biosynthesis; isopentenyl diphosphate biosynthesis via mevalonate pathway. Its function is as follows. Component of a hydro-lyase that catalyzes the dehydration of mevalonate 5-phosphate (MVA5P) to form trans-anhydromevalonate 5-phosphate (tAHMP). Involved in the archaeal mevalonate (MVA) pathway, which provides fundamental precursors for isoprenoid biosynthesis, such as isopentenyl diphosphate (IPP) and dimethylallyl diphosphate (DMAPP). This Thermococcus onnurineus (strain NA1) protein is Phosphomevalonate dehydratase small subunit.